A 300-amino-acid polypeptide reads, in one-letter code: N-acetylmuramic acid 6-phosphate etherase (300 aa).

Positions 57–220 constitute an SIS domain; the sequence is IAVAFQSGGR…TTGAMIRTGK (164 aa). Residue glutamate 85 is the Proton donor of the active site. Glutamate 116 is a catalytic residue.

This sequence belongs to the GCKR-like family. MurNAc-6-P etherase subfamily. In terms of assembly, homodimer.

It carries out the reaction N-acetyl-D-muramate 6-phosphate + H2O = N-acetyl-D-glucosamine 6-phosphate + (R)-lactate. It participates in amino-sugar metabolism; 1,6-anhydro-N-acetylmuramate degradation. Its pathway is amino-sugar metabolism; N-acetylmuramate degradation. It functions in the pathway cell wall biogenesis; peptidoglycan recycling. Specifically catalyzes the cleavage of the D-lactyl ether substituent of MurNAc 6-phosphate, producing GlcNAc 6-phosphate and D-lactate. Together with AnmK, is also required for the utilization of anhydro-N-acetylmuramic acid (anhMurNAc) either imported from the medium or derived from its own cell wall murein, and thus plays a role in cell wall recycling. The chain is N-acetylmuramic acid 6-phosphate etherase from Aliivibrio fischeri (strain ATCC 700601 / ES114) (Vibrio fischeri).